The primary structure comprises 166 residues: MKVYVIDYHKDDPKKCTGRKLVKLKLAELTRVGRGIILNPFSERTLSINDKDILIKSGITIIDTSWNNTSQNEFKNVRGEHRRLPILFAGNPIHYGIAYKLSSLEALMATLYILDEVKEAIKFSNVVKWGHTFIELNKELLEAYRNKDEEEIKKIEKEIIEKILRK.

S-adenosyl-L-methionine-binding residues include Thr-17, Ile-62, Leu-84, Tyr-99, and Ser-103.

Belongs to the TDD superfamily. TSR3 family.

The protein resides in the cytoplasm. The catalysed reaction is an N(1)-methylpseudouridine in rRNA + S-adenosyl-L-methionine = N(1)-methyl-N(3)-[(3S)-3-amino-3-carboxypropyl]pseudouridine in rRNA + S-methyl-5'-thioadenosine + H(+). In terms of biological role, aminocarboxypropyltransferase that catalyzes the aminocarboxypropyl transfer on pseudouridine corresponding to position 914 in M.jannaschii 16S rRNA. It constitutes the last step in biosynthesis of the hypermodified N1-methyl-N3-(3-amino-3-carboxypropyl) pseudouridine (m1acp3-Psi). This Saccharolobus islandicus (strain Y.N.15.51 / Yellowstone #2) (Sulfolobus islandicus) protein is 16S rRNA aminocarboxypropyltransferase.